The chain runs to 92 residues: Signal recognition particle 19 kDa protein (92 aa).

Belongs to the SRP19 family. In terms of assembly, part of the signal recognition particle protein translocation system, which is composed of SRP and FtsY. Archaeal SRP consists of a 7S RNA molecule of 300 nucleotides and two protein subunits: SRP54 and SRP19.

It localises to the cytoplasm. Functionally, involved in targeting and insertion of nascent membrane proteins into the cytoplasmic membrane. Binds directly to 7S RNA and mediates binding of the 54 kDa subunit of the SRP. This Haloarcula marismortui (strain ATCC 43049 / DSM 3752 / JCM 8966 / VKM B-1809) (Halobacterium marismortui) protein is Signal recognition particle 19 kDa protein.